The chain runs to 443 residues: Xaa-Pro dipeptidase (443 aa).

Mn(2+) contacts are provided by aspartate 246, aspartate 257, histidine 339, glutamate 384, and glutamate 423.

This sequence belongs to the peptidase M24B family. Bacterial-type prolidase subfamily. Mn(2+) is required as a cofactor.

It catalyses the reaction Xaa-L-Pro dipeptide + H2O = an L-alpha-amino acid + L-proline. In terms of biological role, splits dipeptides with a prolyl residue in the C-terminal position. The protein is Xaa-Pro dipeptidase of Escherichia coli O157:H7.